The chain runs to 477 residues: Glutamyl-tRNA(Gln) amidotransferase subunit A (477 aa).

Residues K76 and S151 each act as charge relay system in the active site. S175 (acyl-ester intermediate) is an active-site residue.

The protein belongs to the amidase family. GatA subfamily. As to quaternary structure, heterotrimer of A, B and C subunits.

It catalyses the reaction L-glutamyl-tRNA(Gln) + L-glutamine + ATP + H2O = L-glutaminyl-tRNA(Gln) + L-glutamate + ADP + phosphate + H(+). Allows the formation of correctly charged Gln-tRNA(Gln) through the transamidation of misacylated Glu-tRNA(Gln) in organisms which lack glutaminyl-tRNA synthetase. The reaction takes place in the presence of glutamine and ATP through an activated gamma-phospho-Glu-tRNA(Gln). The sequence is that of Glutamyl-tRNA(Gln) amidotransferase subunit A from Prosthecochloris aestuarii (strain DSM 271 / SK 413).